The primary structure comprises 308 residues: Ornithine carbamoyltransferase (308 aa).

Residues 56–59 (STRT), Gln-83, Arg-107, and 134–137 (HPCQ) each bind carbamoyl phosphate. L-ornithine contacts are provided by residues Asn-165, Asp-225, and 229 to 230 (SM). Residues 266 to 267 (CL) and Arg-294 contribute to the carbamoyl phosphate site.

The protein belongs to the aspartate/ornithine carbamoyltransferase superfamily. OTCase family.

The protein localises to the cytoplasm. The catalysed reaction is carbamoyl phosphate + L-ornithine = L-citrulline + phosphate + H(+). It functions in the pathway amino-acid biosynthesis; L-arginine biosynthesis; L-arginine from L-ornithine and carbamoyl phosphate: step 1/3. Reversibly catalyzes the transfer of the carbamoyl group from carbamoyl phosphate (CP) to the N(epsilon) atom of ornithine (ORN) to produce L-citrulline. The polypeptide is Ornithine carbamoyltransferase (Ruegeria pomeroyi (strain ATCC 700808 / DSM 15171 / DSS-3) (Silicibacter pomeroyi)).